Consider the following 100-residue polypeptide: Large ribosomal subunit protein eL30 (100 aa).

This sequence belongs to the eukaryotic ribosomal protein eL30 family.

The chain is Large ribosomal subunit protein eL30 from Thermococcus sibiricus (strain DSM 12597 / MM 739).